The following is a 134-amino-acid chain: Ribonuclease P protein component (134 aa).

It belongs to the RnpA family. Consists of a catalytic RNA component (M1 or rnpB) and a protein subunit.

The catalysed reaction is Endonucleolytic cleavage of RNA, removing 5'-extranucleotides from tRNA precursor.. In terms of biological role, RNaseP catalyzes the removal of the 5'-leader sequence from pre-tRNA to produce the mature 5'-terminus. It can also cleave other RNA substrates such as 4.5S RNA. The protein component plays an auxiliary but essential role in vivo by binding to the 5'-leader sequence and broadening the substrate specificity of the ribozyme. This chain is Ribonuclease P protein component, found in Pseudomonas putida (strain GB-1).